The sequence spans 276 residues: Tyrosinase (276 aa).

Residues histidine 38, histidine 56, histidine 66, histidine 193, histidine 197, and histidine 219 each contribute to the Cu cation site.

This sequence belongs to the tyrosinase family. It depends on Cu(2+) as a cofactor.

The enzyme catalyses 2 L-dopa + O2 = 2 L-dopaquinone + 2 H2O. The catalysed reaction is L-tyrosine + O2 = L-dopaquinone + H2O. In terms of biological role, this is a copper-containing oxidase that functions in the formation of pigments such as melanins and other polyphenolic compounds. This is Tyrosinase (melC2) from Streptomyces galbus.